A 365-amino-acid chain; its full sequence is Flagellar P-ring protein (365 aa).

An N-terminal signal peptide occupies residues 1-19; that stretch reads MIKFLSALILLLVTTAAQA.

The protein belongs to the FlgI family. The basal body constitutes a major portion of the flagellar organelle and consists of four rings (L,P,S, and M) mounted on a central rod.

Its subcellular location is the periplasm. The protein localises to the bacterial flagellum basal body. Functionally, assembles around the rod to form the L-ring and probably protects the motor/basal body from shearing forces during rotation. This Escherichia coli O9:H4 (strain HS) protein is Flagellar P-ring protein.